Here is a 174-residue protein sequence, read N- to C-terminus: Adipose-secreted signaling protein (174 aa).

Ala-2 carries the post-translational modification N-acetylalanine. Position 147 is a phosphothreonine (Thr-147).

The protein belongs to the ADISSP family.

The protein resides in the secreted. Adipocyte-secreted protein (adipokine) that acts as a key regulator for white adipose tissue (WAT) thermogenesis and glucose homeostasis at least in part through activation of protein kinase A (PKA). This Homo sapiens (Human) protein is Adipose-secreted signaling protein.